The primary structure comprises 44 residues: uncharacterized protein (44 aa).

This is an uncharacterized protein from Haemophilus influenzae (strain ATCC 51907 / DSM 11121 / KW20 / Rd).